We begin with the raw amino-acid sequence, 188 residues long: Ribosomal RNA small subunit methyltransferase G (188 aa).

S-adenosyl-L-methionine is bound by residues G69, F74, 119-120 (VQ), and R134.

Belongs to the methyltransferase superfamily. RNA methyltransferase RsmG family.

It localises to the cytoplasm. The enzyme catalyses guanosine(527) in 16S rRNA + S-adenosyl-L-methionine = N(7)-methylguanosine(527) in 16S rRNA + S-adenosyl-L-homocysteine. Specifically methylates the N7 position of guanine in position 527 of 16S rRNA. In Campylobacter jejuni (strain RM1221), this protein is Ribosomal RNA small subunit methyltransferase G.